The following is a 379-amino-acid chain: Cytochrome b (379 aa).

A run of 4 helical transmembrane segments spans residues 33–53 (FGSL…FLAM), 77–98 (WLIR…YFHI), 113–133 (WNMG…GYVL), and 178–198 (FFAF…IHLL). Heme b-binding residues include H83 and H97. Heme b is bound by residues H182 and H196. Residue H201 participates in a ubiquinone binding. Helical transmembrane passes span 226–246 (IKDI…VMFS), 288–308 (LGGV…PILH), 320–340 (LSQC…WIGG), and 347–367 (FITI…ILMP).

This sequence belongs to the cytochrome b family. The cytochrome bc1 complex contains 11 subunits: 3 respiratory subunits (MT-CYB, CYC1 and UQCRFS1), 2 core proteins (UQCRC1 and UQCRC2) and 6 low-molecular weight proteins (UQCRH/QCR6, UQCRB/QCR7, UQCRQ/QCR8, UQCR10/QCR9, UQCR11/QCR10 and a cleavage product of UQCRFS1). This cytochrome bc1 complex then forms a dimer. The cofactor is heme b.

It is found in the mitochondrion inner membrane. In terms of biological role, component of the ubiquinol-cytochrome c reductase complex (complex III or cytochrome b-c1 complex) that is part of the mitochondrial respiratory chain. The b-c1 complex mediates electron transfer from ubiquinol to cytochrome c. Contributes to the generation of a proton gradient across the mitochondrial membrane that is then used for ATP synthesis. The polypeptide is Cytochrome b (MT-CYB) (Ctenomys leucodon (White-toothed tuco-tuco)).